The following is a 241-amino-acid chain: Thyroid transcription factor 1-associated protein 26 (241 aa).

2 disordered regions span residues 1–22 (MAPVRRSAKWRPGGIEARGEGV) and 182–205 (KRAAKKQEFERRKQEREEAQRQYK). The span at 186 to 202 (KKQEFERRKQEREEAQR) shows a compositional bias: basic and acidic residues.

The protein belongs to the TAP26 family. As to quaternary structure, interacts with NKX2-1. As to expression, ubiquitously expressed. In lung, expression is restricted to the alveolar epithelial cells.

The protein localises to the nucleus. Its function is as follows. Component of the transcription complexes of the pulmonary surfactant-associated protein-B (SFTPB) and -C (SFTPC). Enhances homeobox protein Nkx-2.1-activated SFTPB and SFTPC promoter activities. The protein is Thyroid transcription factor 1-associated protein 26 (CCDC59) of Homo sapiens (Human).